The chain runs to 269 residues: 4-chlorobenzoyl coenzyme A dehalogenase (269 aa).

Residues Arg24 and Ala62–Arg67 contribute to the substrate site. His90 (proton acceptor) is an active-site residue. Gly114 contacts substrate. Residue Asp145 is the Nucleophile of the active site. Arg257 is a substrate binding site.

It belongs to the enoyl-CoA hydratase/isomerase family. In terms of assembly, homotetramer. Homotetramer, homooctamer and larger multimers. Homotrimer.

The catalysed reaction is 4-chlorobenzoyl-CoA + H2O = 4-hydroxybenzoyl-CoA + chloride + H(+). Its pathway is xenobiotic degradation; 4-chlorobenzoate degradation; 4-hydroxybenzoate from 4-chlorobenzoate: step 2/3. With respect to regulation, inactivated by 1 mM Ag(+) and by 5 mM Cu(2+). Partially inhibited by 5 mM Zn(2+), Mn(2+), Co(2+), Fe(2+) and Ni(2+). Unaffected by 10 mM Na(+), K(+) and Li(+) and by 0.5 mM Mg(2+), Mn(2+), Fe(2+), Ca(2+), Co(2+) and Zn(2+). Inhibited by the sulfhydryl blocking agent 5,5'-dithio-bis-(2-nitrobenzoate), SDS and N-bromosuccinimide. Unaffected by sodium azide and EDTA. Inactivated following treatment with diethyl pyrocarbonate; this inactivation is reversible by treatment with hydroxylamine. In terms of biological role, dehalogenates 4-chlorobenzoyl-CoA, 4-iodobenzoyl-CoA and 4-bromobenzoyl-CoA, but not 4-fluorobenzoyl-CoA. Inactive towards crotonyl-CoA, alpha-methylcrotonyl-CoA and beta-methylcrotonyl-CoA. This Pseudomonas sp. (strain CBS-3) protein is 4-chlorobenzoyl coenzyme A dehalogenase.